Consider the following 383-residue polypeptide: Acetylornithine deacetylase (383 aa).

Histidine 80 lines the Zn(2+) pocket. Aspartate 82 is a catalytic residue. Aspartate 112 serves as a coordination point for Zn(2+). Glutamate 144 is an active-site residue. Zn(2+)-binding residues include glutamate 145, glutamate 169, and histidine 355.

The protein belongs to the peptidase M20A family. ArgE subfamily. As to quaternary structure, homodimer. The cofactor is Zn(2+). Co(2+) serves as cofactor. It depends on glutathione as a cofactor.

The protein resides in the cytoplasm. The enzyme catalyses N(2)-acetyl-L-ornithine + H2O = L-ornithine + acetate. It participates in amino-acid biosynthesis; L-arginine biosynthesis; L-ornithine from N(2)-acetyl-L-ornithine (linear): step 1/1. Its function is as follows. Catalyzes the hydrolysis of the amide bond of N(2)-acetylated L-amino acids. Cleaves the acetyl group from N-acetyl-L-ornithine to form L-ornithine, an intermediate in L-arginine biosynthesis pathway, and a branchpoint in the synthesis of polyamines. The polypeptide is Acetylornithine deacetylase (Klebsiella pneumoniae (strain 342)).